We begin with the raw amino-acid sequence, 113 residues long: Iron-sulfur cluster insertion protein ErpA (113 aa).

Iron-sulfur cluster contacts are provided by Cys41, Cys105, and Cys107.

Belongs to the HesB/IscA family. As to quaternary structure, homodimer. It depends on iron-sulfur cluster as a cofactor.

In terms of biological role, required for insertion of 4Fe-4S clusters for at least IspG. This chain is Iron-sulfur cluster insertion protein ErpA, found in Actinobacillus pleuropneumoniae serotype 3 (strain JL03).